We begin with the raw amino-acid sequence, 401 residues long: 4-hydroxy-3-methylbut-2-enyl diphosphate reductase (401 aa).

C66 lines the [4Fe-4S] cluster pocket. (2E)-4-hydroxy-3-methylbut-2-enyl diphosphate is bound at residue H96. H96 contacts dimethylallyl diphosphate. H96 is an isopentenyl diphosphate binding site. C157 contacts [4Fe-4S] cluster. Residue H185 coordinates (2E)-4-hydroxy-3-methylbut-2-enyl diphosphate. Position 185 (H185) interacts with dimethylallyl diphosphate. Residue H185 coordinates isopentenyl diphosphate. The active-site Proton donor is the E187. A (2E)-4-hydroxy-3-methylbut-2-enyl diphosphate-binding site is contributed by T250. C288 contributes to the [4Fe-4S] cluster binding site. Residues S317, S318, N319, and S379 each contribute to the (2E)-4-hydroxy-3-methylbut-2-enyl diphosphate site. Residues S317, S318, N319, and S379 each coordinate dimethylallyl diphosphate. Positions 317, 318, 319, and 379 each coordinate isopentenyl diphosphate.

Belongs to the IspH family. It depends on [4Fe-4S] cluster as a cofactor.

The catalysed reaction is isopentenyl diphosphate + 2 oxidized [2Fe-2S]-[ferredoxin] + H2O = (2E)-4-hydroxy-3-methylbut-2-enyl diphosphate + 2 reduced [2Fe-2S]-[ferredoxin] + 2 H(+). It catalyses the reaction dimethylallyl diphosphate + 2 oxidized [2Fe-2S]-[ferredoxin] + H2O = (2E)-4-hydroxy-3-methylbut-2-enyl diphosphate + 2 reduced [2Fe-2S]-[ferredoxin] + 2 H(+). Its pathway is isoprenoid biosynthesis; dimethylallyl diphosphate biosynthesis; dimethylallyl diphosphate from (2E)-4-hydroxy-3-methylbutenyl diphosphate: step 1/1. It functions in the pathway isoprenoid biosynthesis; isopentenyl diphosphate biosynthesis via DXP pathway; isopentenyl diphosphate from 1-deoxy-D-xylulose 5-phosphate: step 6/6. Catalyzes the conversion of 1-hydroxy-2-methyl-2-(E)-butenyl 4-diphosphate (HMBPP) into a mixture of isopentenyl diphosphate (IPP) and dimethylallyl diphosphate (DMAPP). Acts in the terminal step of the DOXP/MEP pathway for isoprenoid precursor biosynthesis. This is 4-hydroxy-3-methylbut-2-enyl diphosphate reductase from Trichodesmium erythraeum (strain IMS101).